Consider the following 376-residue polypeptide: Glutamate 5-kinase (376 aa).

Residue Lys18 coordinates ATP. Substrate is bound by residues Ser58, Asp145, and Asn157. ATP-binding positions include 177-178 (SD) and 218-224 (TGGMASK). Residues 280-358 (TGALTLDAGA…SELPGELRRP (79 aa)) enclose the PUA domain.

Belongs to the glutamate 5-kinase family.

The protein resides in the cytoplasm. It carries out the reaction L-glutamate + ATP = L-glutamyl 5-phosphate + ADP. The protein operates within amino-acid biosynthesis; L-proline biosynthesis; L-glutamate 5-semialdehyde from L-glutamate: step 1/2. Catalyzes the transfer of a phosphate group to glutamate to form L-glutamate 5-phosphate. This is Glutamate 5-kinase from Mycobacterium tuberculosis (strain CDC 1551 / Oshkosh).